The primary structure comprises 812 residues: 5-methyltetrahydropteroyltriglutamate--homocysteine methyltransferase 3, chloroplastic (812 aa).

A chloroplast-targeting transit peptide spans 1-33 (MGQLALQRLQPLASLPRRPPSLPPPSSATPSLP). Residues 13–33 (ASLPRRPPSLPPPSSATPSLP) are disordered. A compositionally biased stretch (pro residues) spans 17-27 (RRPPSLPPPSS). Positions 66 and 164 each coordinate 5-methyltetrahydropteroyltri-L-glutamate. The segment at 430–456 (MRQASRRSSPRVTNAAVQQDVDAVKKS) is disordered. Residues 485–487 (IGS) and E538 each bind L-homocysteine. Residues 485–487 (IGS) and E538 each bind L-methionine. Residues D543, Y566, 569 to 570 (RC), and W615 each bind 5-methyltetrahydropteroyltri-L-glutamate. Residue D653 coordinates L-homocysteine. Residue D653 coordinates L-methionine. H695, C697, H706, D710, and E719 together coordinate Zn(2+). H749 functions as the Proton donor in the catalytic mechanism. C781 provides a ligand contact to Zn(2+).

Belongs to the vitamin-B12 independent methionine synthase family. It depends on Zn(2+) as a cofactor. Expressed in seeds.

It is found in the plastid. The protein resides in the chloroplast. The catalysed reaction is 5-methyltetrahydropteroyltri-L-glutamate + L-homocysteine = tetrahydropteroyltri-L-glutamate + L-methionine. Its pathway is amino-acid biosynthesis; L-methionine biosynthesis via de novo pathway; L-methionine from L-homocysteine (MetE route): step 1/1. Its function is as follows. Catalyzes the transfer of a methyl group from 5-methyltetrahydrofolate to homocysteine resulting in methionine formation. The chain is 5-methyltetrahydropteroyltriglutamate--homocysteine methyltransferase 3, chloroplastic (MS3) from Arabidopsis thaliana (Mouse-ear cress).